Reading from the N-terminus, the 339-residue chain is UPF0324 membrane protein M6_Spy0799 (339 aa).

Transmembrane regions (helical) follow at residues 7–24 (KLPGLLLCLLLALPAWYL), 28–50 (FPIIGAPVFAILLGMLLALFYEH), 57–79 (GISFTSKYILQTAVVLLGFGLNL), 84–106 (AVGMQSLPIIISTIATALLVAYG), 118–140 (ATLVGVGSSICGGSAIAATAPVI), 150–172 (AISVIFLFNMLAALLFPSLGQLL), 256–275 (FILFFLLASLITTLMISLGV), 290–307 (FIVMAMAAIGLNTNLVKL), and 314–336 (AILLGAICWVAITLVSLAMQLSL).

The protein belongs to the UPF0324 family.

It localises to the cell membrane. This Streptococcus pyogenes serotype M6 (strain ATCC BAA-946 / MGAS10394) protein is UPF0324 membrane protein M6_Spy0799.